The sequence spans 422 residues: Nuclear hormone receptor family member nhr-54 (422 aa).

Residues Ser14–Thr92 constitute a DNA-binding region (nuclear receptor). 2 NR C4-type zinc fingers span residues Cys17–Cys37 and Cys53–Cys80. Residues Pro161–Val422 form the NR LBD domain.

It belongs to the nuclear hormone receptor family.

The protein resides in the nucleus. Orphan nuclear receptor. In Caenorhabditis elegans, this protein is Nuclear hormone receptor family member nhr-54 (nhr-54).